Here is a 330-residue protein sequence, read N- to C-terminus: Syntaxin-121 (330 aa).

The segment covering 1-10 has biased composition (polar residues); it reads MNNLFSSSWK. The disordered stretch occupies residues 1 to 39; it reads MNNLFSSSWKRTGGGGGGDGDIESGGGVEMAPPPGAAAG. The Cytoplasmic portion of the chain corresponds to 1 to 284; the sequence is MNNLFSSSWK…RKHQKSTRKW (284 aa). Residues 12–28 are compositionally biased toward gly residues; that stretch reads TGGGGGGDGDIESGGGV. In terms of domain architecture, t-SNARE coiled-coil homology spans 212 to 274; that stretch reads VAEIQERHGA…DRGREQLVVA (63 aa). Residues 285–305 form a helical; Anchor for type IV membrane protein membrane-spanning segment; the sequence is TCIAIIILLVLILVVVLPIVL. Residues 306-330 lie on the Vesicular side of the membrane; it reads KFVNNNKSSSSSPAPATPSPPPPTA. Residues 311 to 330 form a disordered region; that stretch reads NKSSSSSPAPATPSPPPPTA. Positions 320-330 are enriched in pro residues; the sequence is PATPSPPPPTA.

This sequence belongs to the syntaxin family. Interacts with SNAP32. Expressed in roots, stems, leaf blades and leaf sheaths.

The protein localises to the cell membrane. Functionally, vesicle trafficking protein that functions in the secretory pathway. Involved in plant defense by mediating host resistance to the rice blast fungus Magnaporthe oryzae. The interaction with SNAP32 may contribute to host resistance to the rice blast fungus. The chain is Syntaxin-121 from Oryza sativa subsp. japonica (Rice).